The sequence spans 563 residues: MDTKTLIASEIAKVVPELEQDAIFNLLETPKNSDMGDLAFPAFSLAKVLRKAPQMIASELAEQIDESQFEKVVAVGPYINFFLDKAKISSQVLEQVITAGSDYAQQDEGQGRNVAIDMSSPNIAKPFSIGHLRSTVIGDSLAHIFAKMGYKPVKINHLGDWGKQFGMLIVAYKKWGDEAAVQAHPIDELLKLYVRINAEAETDPTVDEEAREWFRKLEDGDKEATELWQWFRDESLLEFNRLYDQLHVTFDSYNGEAFYNDKMDEVLELLEAKNLLVESKGAQVVNLEKYGIEHPALIKKSDGATLYITRDLAAALYRKRTYDFAKSVYVVGNEQAAHFKQLKAVLKEMGYDWSDDMTHVAFGLVTKGGAKLSTRKGNVILLEPTVAEAINRAASQIEAKNPNLADKEAVAHAVGVGAIKFYDLKTDRMNGYDFDLEAMVSFEGETGPYVQYAHARIQSILRKADFTPSATTTYSLADAESWEIIKLIQDFPRIIKRTSDNFEPSIMAKFAINLAQSFNKYYAHTRILDDNSERDNRLALCYATATVLKEALRLLGVDAPNEM.

The 'HIGH' region motif lies at 121–131 (PNIAKPFSIGH).

This sequence belongs to the class-I aminoacyl-tRNA synthetase family. As to quaternary structure, monomer.

It is found in the cytoplasm. It carries out the reaction tRNA(Arg) + L-arginine + ATP = L-arginyl-tRNA(Arg) + AMP + diphosphate. In Streptococcus pyogenes serotype M3 (strain ATCC BAA-595 / MGAS315), this protein is Arginine--tRNA ligase.